Consider the following 890-residue polypeptide: Nitrate reductase [NADH] 2 (890 aa).

A Mo-molybdopterin-binding site is contributed by Cys165. Residues 513–588 (SKMFSVSEVK…LEDYRIGELI (76 aa)) enclose the Cytochrome b5 heme-binding domain. The heme site is built by His548 and His571. In terms of domain architecture, FAD-binding FR-type spans 634 to 746 (RQKIPCKLVS…KGPLGHIEYT (113 aa)). Residues 686 to 689 (RAYT), 703 to 707 (LIKVY), Phe708, Phe715, 720 to 722 (LMS), and Thr773 contribute to the FAD site.

Belongs to the nitrate reductase family. In terms of assembly, homodimer. It depends on FAD as a cofactor. Heme is required as a cofactor. The cofactor is Mo-molybdopterin.

It catalyses the reaction nitrite + NAD(+) + H2O = nitrate + NADH + H(+). Functionally, nitrate reductase is a key enzyme involved in the first step of nitrate assimilation in plants, fungi and bacteria. This Phaseolus vulgaris (Kidney bean) protein is Nitrate reductase [NADH] 2 (NIA2).